We begin with the raw amino-acid sequence, 356 residues long: Photosystem II protein D1 4 (356 aa).

The next 3 membrane-spanning stretches (helical) occupy residues 32-49, 121-136, and 145-159; these read YIGW…AATT, HFLI…FWEL, and WIAV…AATS. H121 serves as a coordination point for chlorophyll a. [CaMn4O5] cluster-binding residues include D173 and D192. The chain crosses the membrane as a helical span at residues 200-221; sequence FHMLGVAGVFGGALLSSLHGSL. H201 serves as a coordination point for chlorophyll a. H218 contacts a quinone. H218 and H276 together coordinate Fe cation. Residues 278–292 form a helical membrane-spanning segment; the sequence is LLAALPTIGIWFAAM. Position 336 (H336) interacts with [CaMn4O5] cluster.

This sequence belongs to the reaction center PufL/M/PsbA/D family. PSII is composed of 1 copy each of membrane proteins PsbA, PsbB, PsbC, PsbD, PsbE, PsbF, PsbH, PsbI, PsbJ, PsbK, PsbL, PsbM, PsbT, PsbX, PsbY, PsbZ, Psb30/Ycf12, peripheral proteins PsbO, CyanoQ (PsbQ), PsbU, PsbV and a large number of cofactors. It forms dimeric complexes. The D1/D2 heterodimer binds P680, chlorophylls that are the primary electron donor of PSII, and subsequent electron acceptors. It shares a non-heme iron and each subunit binds pheophytin, quinone, additional chlorophylls, carotenoids and lipids. D1 provides most of the ligands for the Mn4-Ca-O5 cluster of the oxygen-evolving complex (OEC). There is also a Cl(-1) ion associated with D1 and D2, which is required for oxygen evolution. The PSII complex binds additional chlorophylls, carotenoids and specific lipids. serves as cofactor. In terms of processing, tyr-164 forms a radical intermediate that is referred to as redox-active TyrZ, YZ or Y-Z.

It localises to the cellular thylakoid membrane. The enzyme catalyses 2 a plastoquinone + 4 hnu + 2 H2O = 2 a plastoquinol + O2. In terms of biological role, photosystem II (PSII) is a light-driven water:plastoquinone oxidoreductase that uses light energy to abstract electrons from H(2)O, generating O(2) and a proton gradient subsequently used for ATP formation. It consists of a core antenna complex that captures photons, and an electron transfer chain that converts photonic excitation into a charge separation. The D1/D2 (PsbA/PsbD) reaction center heterodimer binds P680, the primary electron donor of PSII as well as several subsequent electron acceptors. The polypeptide is Photosystem II protein D1 4 (Trichormus variabilis (strain ATCC 29413 / PCC 7937) (Anabaena variabilis)).